We begin with the raw amino-acid sequence, 295 residues long: 4-hydroxy-tetrahydrodipicolinate synthase (295 aa).

Thr47 is a pyruvate binding site. The Proton donor/acceptor role is filled by Tyr135. Lys163 (schiff-base intermediate with substrate) is an active-site residue. A pyruvate-binding site is contributed by Ile204.

This sequence belongs to the DapA family. Homotetramer; dimer of dimers.

It localises to the cytoplasm. It catalyses the reaction L-aspartate 4-semialdehyde + pyruvate = (2S,4S)-4-hydroxy-2,3,4,5-tetrahydrodipicolinate + H2O + H(+). It functions in the pathway amino-acid biosynthesis; L-lysine biosynthesis via DAP pathway; (S)-tetrahydrodipicolinate from L-aspartate: step 3/4. Its function is as follows. Catalyzes the condensation of (S)-aspartate-beta-semialdehyde [(S)-ASA] and pyruvate to 4-hydroxy-tetrahydrodipicolinate (HTPA). This chain is 4-hydroxy-tetrahydrodipicolinate synthase, found in Caldicellulosiruptor saccharolyticus (strain ATCC 43494 / DSM 8903 / Tp8T 6331).